A 242-amino-acid polypeptide reads, in one-letter code: Trypsin-1 (242 aa).

Residues 1–15 (MISLVFVLLIGAAFA) form the signal peptide. Residues 16–20 (TEDDK) constitute a propeptide, activation peptide. Residues 21-240 (IVGGYECKAY…FNDWLTSTMA (220 aa)) enclose the Peptidase S1 domain. Disulfide bonds link Cys-27/Cys-156, Cys-45/Cys-61, Cys-129/Cys-229, Cys-136/Cys-202, Cys-167/Cys-181, and Cys-192/Cys-216. His-60 (charge relay system) is an active-site residue. The Ca(2+) site is built by Glu-72, Asn-74, Val-77, and Glu-82. Asp-104 functions as the Charge relay system in the catalytic mechanism. The active-site Charge relay system is Ser-196.

It belongs to the peptidase S1 family. Ca(2+) is required as a cofactor.

It localises to the secreted. Its subcellular location is the extracellular space. The enzyme catalyses Preferential cleavage: Arg-|-Xaa, Lys-|-Xaa.. The polypeptide is Trypsin-1 (Salmo salar (Atlantic salmon)).